The primary structure comprises 356 residues: tRNA N6-adenosine threonylcarbamoyltransferase (356 aa).

The Fe cation site is built by H115 and H119. Substrate-binding positions include L138–G142, D171, G184, and N283. D311 contacts Fe cation.

This sequence belongs to the KAE1 / TsaD family. The cofactor is Fe(2+).

It localises to the cytoplasm. The enzyme catalyses L-threonylcarbamoyladenylate + adenosine(37) in tRNA = N(6)-L-threonylcarbamoyladenosine(37) in tRNA + AMP + H(+). Its function is as follows. Required for the formation of a threonylcarbamoyl group on adenosine at position 37 (t(6)A37) in tRNAs that read codons beginning with adenine. Is involved in the transfer of the threonylcarbamoyl moiety of threonylcarbamoyl-AMP (TC-AMP) to the N6 group of A37, together with TsaE and TsaB. TsaD likely plays a direct catalytic role in this reaction. The chain is tRNA N6-adenosine threonylcarbamoyltransferase from Prochlorococcus marinus (strain MIT 9215).